A 591-amino-acid chain; its full sequence is MNKISLPKIGIRPVIDGRRMGVRESLEEQTMNMAKATAALLTEKLRHACGAAVECVISDTCIAGMAEAAACEEKFSSQNVGLTITVTPCWCYGSETIDMDPTRPKAIWGFNGTERPGAVYLAAALAAHSQKGIPAFSIYGHDVQDADDTSIPADVEEKLLRFARAGLAVASMKGKSYLSLGGVSMGIAGSIVDHNFFESWLGMKVQAVDMTELRRRIDQKIYDEAELEMALAWADKNFRYGEDENNKQYQRNAEQSRAVLRESLLMAMCIRDMMQGNSKLADIGRVEESLGYNAIAAGFQGQRHWTDQYPNGDTAEAILNSSFDWNGVREPFVVATENDSLNGVAMLMGHQLTGTAQVFADVRTYWSPEAIERVTGHKLDGLAEHGIIHLINSGSAALDGSCKQRDSEGNPTMKPHWEISQQEADACLAATEWCPAIHEYFRGGGYSSRFLTEGGVPFTMTRVNIIKGLGPVLQIAEGWSVELPKDVHDILNKRTNSTWPTTWFAPRLTGKGPFTDVYSVMANWGANHGVLTIGHVGADFITLASMLRIPVCMHNVEETKVYRPSAWAAHGMDIEGQDYRACQNYGPLYKR.

Catalysis depends on proton acceptor residues E337 and D361. Mn(2+) contacts are provided by E337, D361, and H528.

Belongs to the L-fucose isomerase family. In terms of assembly, homohexamer. The cofactor is Mn(2+).

Its subcellular location is the cytoplasm. The catalysed reaction is L-fucose = L-fuculose. Its pathway is carbohydrate degradation; L-fucose degradation; L-lactaldehyde and glycerone phosphate from L-fucose: step 1/3. Functionally, converts the aldose L-fucose into the corresponding ketose L-fuculose. This chain is L-fucose isomerase, found in Escherichia coli O157:H7 (strain EC4115 / EHEC).